The following is a 692-amino-acid chain: Elongation factor G (692 aa).

The tr-type G domain maps to 8-283 (NRIRNIGIAA…AVIDYLPAPT (276 aa)). GTP is bound by residues 17–24 (AHIDAGKT), 81–85 (DTPGH), and 135–138 (NKMD).

It belongs to the TRAFAC class translation factor GTPase superfamily. Classic translation factor GTPase family. EF-G/EF-2 subfamily.

Its subcellular location is the cytoplasm. Functionally, catalyzes the GTP-dependent ribosomal translocation step during translation elongation. During this step, the ribosome changes from the pre-translocational (PRE) to the post-translocational (POST) state as the newly formed A-site-bound peptidyl-tRNA and P-site-bound deacylated tRNA move to the P and E sites, respectively. Catalyzes the coordinated movement of the two tRNA molecules, the mRNA and conformational changes in the ribosome. This Helicobacter pylori (strain Shi470) protein is Elongation factor G.